Reading from the N-terminus, the 133-residue chain is Probable nuclear transport factor 2 (133 aa).

In terms of domain architecture, NTF2 spans 10–128 (VAKAFIQHYY…YFIGNEIFRL (119 aa)).

Its subcellular location is the cytoplasm. Facilitates protein transport into the nucleus. Could be part of a multicomponent system of cytosolic factors that assemble at the pore complex during nuclear import. This Caenorhabditis elegans protein is Probable nuclear transport factor 2 (ran-4).